The sequence spans 344 residues: Glycerol-3-phosphate dehydrogenase [NAD(P)+] (344 aa).

NADPH-binding residues include S18, Y19, H39, and K113. Residues K113, G142, and T144 each contribute to the sn-glycerol 3-phosphate site. Residue A146 participates in NADPH binding. Sn-glycerol 3-phosphate contacts are provided by K198, D251, S261, R262, and N263. Catalysis depends on K198, which acts as the Proton acceptor. An NADPH-binding site is contributed by R262. I286 and E288 together coordinate NADPH.

Belongs to the NAD-dependent glycerol-3-phosphate dehydrogenase family.

It localises to the cytoplasm. It catalyses the reaction sn-glycerol 3-phosphate + NAD(+) = dihydroxyacetone phosphate + NADH + H(+). The catalysed reaction is sn-glycerol 3-phosphate + NADP(+) = dihydroxyacetone phosphate + NADPH + H(+). The protein operates within membrane lipid metabolism; glycerophospholipid metabolism. Functionally, catalyzes the reduction of the glycolytic intermediate dihydroxyacetone phosphate (DHAP) to sn-glycerol 3-phosphate (G3P), the key precursor for phospholipid synthesis. This chain is Glycerol-3-phosphate dehydrogenase [NAD(P)+], found in Blochmanniella pennsylvanica (strain BPEN).